A 268-amino-acid chain; its full sequence is Putative pyruvate, phosphate dikinase regulatory protein (268 aa).

An ADP-binding site is contributed by 147–154; that stretch reads GLSRTSKT.

Belongs to the pyruvate, phosphate/water dikinase regulatory protein family. PDRP subfamily.

It carries out the reaction N(tele)-phospho-L-histidyl/L-threonyl-[pyruvate, phosphate dikinase] + ADP = N(tele)-phospho-L-histidyl/O-phospho-L-threonyl-[pyruvate, phosphate dikinase] + AMP + H(+). The catalysed reaction is N(tele)-phospho-L-histidyl/O-phospho-L-threonyl-[pyruvate, phosphate dikinase] + phosphate + H(+) = N(tele)-phospho-L-histidyl/L-threonyl-[pyruvate, phosphate dikinase] + diphosphate. Bifunctional serine/threonine kinase and phosphorylase involved in the regulation of the pyruvate, phosphate dikinase (PPDK) by catalyzing its phosphorylation/dephosphorylation. This Clostridium beijerinckii (strain ATCC 51743 / NCIMB 8052) (Clostridium acetobutylicum) protein is Putative pyruvate, phosphate dikinase regulatory protein.